The primary structure comprises 98 residues: Small ribosomal subunit protein uS19 (98 aa).

The tract at residues 77-98 is disordered; sequence TRTFRGHAGGKAEKGGSAPKRK.

The protein belongs to the universal ribosomal protein uS19 family.

Functionally, protein S19 forms a complex with S13 that binds strongly to the 16S ribosomal RNA. The protein is Small ribosomal subunit protein uS19 of Chlorobium luteolum (strain DSM 273 / BCRC 81028 / 2530) (Pelodictyon luteolum).